A 237-amino-acid chain; its full sequence is Orotidine 5'-phosphate decarboxylase (237 aa).

Substrate contacts are provided by residues aspartate 17, lysine 39, 66-75 (DLKLHDIGNT), threonine 121, arginine 182, glutamine 191, glycine 211, and arginine 212. Lysine 68 (proton donor) is an active-site residue.

It belongs to the OMP decarboxylase family. Type 1 subfamily. Homodimer.

The catalysed reaction is orotidine 5'-phosphate + H(+) = UMP + CO2. The protein operates within pyrimidine metabolism; UMP biosynthesis via de novo pathway; UMP from orotate: step 2/2. Its function is as follows. Catalyzes the decarboxylation of orotidine 5'-monophosphate (OMP) to uridine 5'-monophosphate (UMP). The polypeptide is Orotidine 5'-phosphate decarboxylase (Rhodopseudomonas palustris (strain TIE-1)).